A 690-amino-acid chain; its full sequence is Glycine--tRNA ligase beta subunit (690 aa).

It belongs to the class-II aminoacyl-tRNA synthetase family. In terms of assembly, tetramer of two alpha and two beta subunits.

It is found in the cytoplasm. The catalysed reaction is tRNA(Gly) + glycine + ATP = glycyl-tRNA(Gly) + AMP + diphosphate. The polypeptide is Glycine--tRNA ligase beta subunit (Buchnera aphidicola subsp. Acyrthosiphon pisum (strain 5A)).